The sequence spans 310 residues: Small ribosomal subunit biogenesis GTPase RsgA (310 aa).

Residues 77–238 form the CP-type G domain; sequence LSKQSHILAA…IIDTPGIKGF (162 aa). Residues 126–129 and 180–188 each bind GTP; these read NKVD and GHSGVGKST. Zn(2+) is bound by residues C262, C267, H269, and C275.

Belongs to the TRAFAC class YlqF/YawG GTPase family. RsgA subfamily. In terms of assembly, monomer. Associates with 30S ribosomal subunit, binds 16S rRNA. Zn(2+) is required as a cofactor.

It is found in the cytoplasm. In terms of biological role, one of several proteins that assist in the late maturation steps of the functional core of the 30S ribosomal subunit. Helps release RbfA from mature subunits. May play a role in the assembly of ribosomal proteins into the subunit. Circularly permuted GTPase that catalyzes slow GTP hydrolysis, GTPase activity is stimulated by the 30S ribosomal subunit. This chain is Small ribosomal subunit biogenesis GTPase RsgA, found in Bacteroides fragilis (strain YCH46).